Here is a 420-residue protein sequence, read N- to C-terminus: WD repeat-containing protein 21 (420 aa).

The DDB-boX motif lies at 73-75 (RQF). WD repeat units follow at residues 251–289 (QSKG…ECVQ), 293–332 (HGSS…SKKR), and 341–383 (GHSN…PFKE).

It is found in the cytoplasm. It localises to the nucleus. This chain is WD repeat-containing protein 21 (wdr21), found in Schizosaccharomyces pombe (strain 972 / ATCC 24843) (Fission yeast).